The chain runs to 541 residues: Zinc finger protein 513 (541 aa).

Residues 1 to 118 (MPRRKQSHPQ…GEARGERPGP (118 aa)) form a disordered region. A compositionally biased stretch (acidic residues) spans 44–57 (LEFEEEEEEEEGDG). 2 positions are modified to phosphoserine: serine 85 and serine 96. Residues 103–115 (EPARGPGEARGER) are compositionally biased toward basic and acidic residues. 8 C2H2-type zinc fingers span residues 150-172 (YSCR…MQTH), 178-200 (FRCG…TRTH), 206-228 (YRCP…QRTH), 360-382 (FACS…MKTH), 388-410 (FRCA…QRVH), 416-438 (YKCP…GRIH), 444-466 (FRCS…MLRH), and 472-494 (FRCA…QKVH). A disordered region spans residues 492 to 541 (KVHGHGGAGGPGLSASEGWAPPHSPPSVLSSRGPPALGTAGSRAVHTDSS).

It belongs to the krueppel C2H2-type zinc-finger protein family. In terms of assembly, binds DNA. Can associate with the proximal promoter regions of PAX6 and SP4, and their known targets including ARR3, RHO, OPN1MW2 and OPN1SW. In the retina, expressed in the outer and inner nuclear layers, and the ganglion cell layer.

It localises to the nucleus. Transcriptional regulator that plays a role in retinal development and maintenance. This is Zinc finger protein 513 (ZNF513) from Homo sapiens (Human).